A 160-amino-acid polypeptide reads, in one-letter code: Ribosomal RNA large subunit methyltransferase H (160 aa).

Residues L76 and G108 each contribute to the S-adenosyl-L-methionine site.

Belongs to the RNA methyltransferase RlmH family. In terms of assembly, homodimer.

It localises to the cytoplasm. It carries out the reaction pseudouridine(1915) in 23S rRNA + S-adenosyl-L-methionine = N(3)-methylpseudouridine(1915) in 23S rRNA + S-adenosyl-L-homocysteine + H(+). Functionally, specifically methylates the pseudouridine at position 1915 (m3Psi1915) in 23S rRNA. In Nitrobacter winogradskyi (strain ATCC 25391 / DSM 10237 / CIP 104748 / NCIMB 11846 / Nb-255), this protein is Ribosomal RNA large subunit methyltransferase H.